A 213-amino-acid chain; its full sequence is Cell division protein SepF (213 aa).

Residues 27 to 103 are disordered; the sequence is VDAPAPRRAP…GSLRGSAPTR (77 aa). Composition is skewed to basic and acidic residues over residues 35-51 and 72-90; these read APVE…RFAD and DEDR…DRPA.

It belongs to the SepF family. As to quaternary structure, homodimer. Interacts with FtsZ.

It localises to the cytoplasm. Cell division protein that is part of the divisome complex and is recruited early to the Z-ring. Probably stimulates Z-ring formation, perhaps through the cross-linking of FtsZ protofilaments. Its function overlaps with FtsA. This Mycobacteroides abscessus (strain ATCC 19977 / DSM 44196 / CCUG 20993 / CIP 104536 / JCM 13569 / NCTC 13031 / TMC 1543 / L948) (Mycobacterium abscessus) protein is Cell division protein SepF.